We begin with the raw amino-acid sequence, 341 residues long: L-threonine 3-dehydrogenase (341 aa).

Cys38 is a binding site for Zn(2+). Residues Thr40 and His43 each act as charge relay system in the active site. Zn(2+)-binding residues include His63, Glu64, Cys93, Cys96, Cys99, and Cys107. NAD(+) is bound by residues Ile175, Asp195, Arg200, 262–264 (LGI), and 286–287 (IY).

The protein belongs to the zinc-containing alcohol dehydrogenase family. Homotetramer. The cofactor is Zn(2+).

It localises to the cytoplasm. The catalysed reaction is L-threonine + NAD(+) = (2S)-2-amino-3-oxobutanoate + NADH + H(+). It participates in amino-acid degradation; L-threonine degradation via oxydo-reductase pathway; glycine from L-threonine: step 1/2. Catalyzes the NAD(+)-dependent oxidation of L-threonine to 2-amino-3-ketobutyrate. The sequence is that of L-threonine 3-dehydrogenase from Shewanella putrefaciens (strain CN-32 / ATCC BAA-453).